The sequence spans 217 residues: Large ribosomal subunit protein uL1 (217 aa).

It belongs to the universal ribosomal protein uL1 family. In terms of assembly, part of the 50S ribosomal subunit.

Its function is as follows. Binds directly to 23S rRNA. The L1 stalk is quite mobile in the ribosome, and is involved in E site tRNA release. Protein L1 is also a translational repressor protein, it controls the translation of the L11 operon by binding to its mRNA. The chain is Large ribosomal subunit protein uL1 from Anaplasma marginale (strain St. Maries).